Reading from the N-terminus, the 454-residue chain is Tubulin beta-2 chain (454 aa).

Residues Gln11, Glu69, Ser138, Gly142, Thr143, Gly144, Asn204, and Asn226 each contribute to the GTP site. Glu69 contacts Mg(2+). The interval 426-454 (QEASVDDEAMEDDAEAEGGAGQNEAVEEF) is disordered. Over residues 429 to 441 (SVDDEAMEDDAEA) the composition is skewed to acidic residues.

It belongs to the tubulin family. As to quaternary structure, dimer of alpha and beta chains. A typical microtubule is a hollow water-filled tube with an outer diameter of 25 nm and an inner diameter of 15 nM. Alpha-beta heterodimers associate head-to-tail to form protofilaments running lengthwise along the microtubule wall with the beta-tubulin subunit facing the microtubule plus end conferring a structural polarity. Microtubules usually have 13 protofilaments but different protofilament numbers can be found in some organisms and specialized cells. Mg(2+) serves as cofactor.

It localises to the cytoplasm. It is found in the cytoskeleton. The protein resides in the spindle. Its subcellular location is the nucleus. Its function is as follows. Tubulin is the major constituent of microtubules, a cylinder consisting of laterally associated linear protofilaments composed of alpha- and beta-tubulin heterodimers. Microtubules grow by the addition of GTP-tubulin dimers to the microtubule end, where a stabilizing cap forms. Below the cap, tubulin dimers are in GDP-bound state, owing to GTPase activity of alpha-tubulin. This is the major beta tubulin of mitotic spindle. This is Tubulin beta-2 chain (BETC) from Physarum polycephalum (Slime mold).